Here is a 249-residue protein sequence, read N- to C-terminus: 3-deoxy-D-manno-octulosonic acid kinase (249 aa).

The active site involves Asp-175.

This sequence belongs to the protein kinase superfamily. KdkA/RfaP family.

The protein resides in the cell inner membrane. It catalyses the reaction an alpha-Kdo-(2-&gt;6)-lipid IVA + ATP = a 4-O-phospho-alpha-Kdo-(2-&gt;6)-lipid IVA + ADP + H(+). Its pathway is bacterial outer membrane biogenesis; LPS core biosynthesis. Catalyzes the ATP-dependent phosphorylation of the 3-deoxy-D-manno-octulosonic acid (Kdo) residue in Kdo-lipid IV(A) at the 4-OH position. The chain is 3-deoxy-D-manno-octulosonic acid kinase from Xanthomonas euvesicatoria pv. vesicatoria (strain 85-10) (Xanthomonas campestris pv. vesicatoria).